Consider the following 374-residue polypeptide: Gibberellin 3-beta-dioxygenase 1 (374 aa).

The region spanning 206–307 (KACAALQLNS…RFSVAYLYGP (102 aa)) is the Fe2OG dioxygenase domain. Residues His-231, Asp-233, and His-288 each coordinate Fe cation. Residue Arg-298 is part of the active site. Arg-298 contacts 2-oxoglutarate.

The protein belongs to the iron/ascorbate-dependent oxidoreductase family. GA3OX subfamily. L-ascorbate is required as a cofactor. Fe(2+) serves as cofactor. Expressed in radicles, roots, internodes, cotyledons, leaves and shoots. Barely detected in developing seeds. Not detected in flowers or young fruits.

It carries out the reaction gibberellin A20 + 2-oxoglutarate + O2 = gibberellin A1 + succinate + CO2. It functions in the pathway plant hormone biosynthesis; gibberellin biosynthesis. In terms of biological role, converts the inactive gibberellin (GA) precursors GA9 and GA20 in the bioactives gibberellins GA4 and GA1. Has a small activity on GA29, producing GA8. Unable to convert GA20 to GA5, GA5 to GA3 or GA12 to GA14. Involved in the production of bioactive GA for vegetative growth and development, but not for the 3-beta-hydroxylation of GA in developing seeds. This Pisum sativum (Garden pea) protein is Gibberellin 3-beta-dioxygenase 1 (LE).